The sequence spans 42 residues: Photosystem I reaction center subunit IX (42 aa).

Residues 7–27 (YLSTAPVLAAVWFGFLAGLLI) traverse the membrane as a helical segment.

It belongs to the PsaJ family.

Its subcellular location is the plastid. It is found in the chloroplast thylakoid membrane. Functionally, may help in the organization of the PsaE and PsaF subunits. This chain is Photosystem I reaction center subunit IX, found in Nephroselmis olivacea (Green alga).